Consider the following 437-residue polypeptide: Protein translocase subunit SecY (437 aa).

The next 10 membrane-spanning stretches (helical) occupy residues 19–39 (LFTL…IPGV), 69–89 (LLQI…SIIL), 122–142 (VALA…APLF), 157–177 (IFTT…VMWL), 189–209 (GMSI…LWAI), 219–239 (WIEF…VVFV), 276–296 (VIPV…AQFA), 316–336 (PIYI…YVAI), 378–398 (GSLY…GFGA), and 400–420 (QNFP…LETV).

It belongs to the SecY/SEC61-alpha family. In terms of assembly, component of the Sec protein translocase complex. Heterotrimer consisting of SecY, SecE and SecG subunits. The heterotrimers can form oligomers, although 1 heterotrimer is thought to be able to translocate proteins. Interacts with the ribosome. Interacts with SecDF, and other proteins may be involved. Interacts with SecA.

Its subcellular location is the cell membrane. Functionally, the central subunit of the protein translocation channel SecYEG. Consists of two halves formed by TMs 1-5 and 6-10. These two domains form a lateral gate at the front which open onto the bilayer between TMs 2 and 7, and are clamped together by SecE at the back. The channel is closed by both a pore ring composed of hydrophobic SecY resides and a short helix (helix 2A) on the extracellular side of the membrane which forms a plug. The plug probably moves laterally to allow the channel to open. The ring and the pore may move independently. The polypeptide is Protein translocase subunit SecY (Streptomyces galbus).